A 461-amino-acid polypeptide reads, in one-letter code: MNIPQLTALCLRYHGVLLDASEEVVHVAVVDAPSHELLDALHFATTKRIEITCWTRQQMEGHASRTQQTLPVAVQEKHQPKAELLTRTLQSALEQRASDIHIEPADNAYRIRLRIDGVLHPLPDVSPDAGVALTARLKVLGNLDIAEHRLPQDGQFTVELAGNAVSFRIATLPCRGGEKVVLRLLQQVGQALDVNTLGMQPLQLADFAHALQQPQGLVLVTGPTGSGKTVTLYSALQKLNTADINICSVEDPVEIPIAGLNQTQIHPRAGLTFQGVLRALLRQDPDVIMIGEIRDGETAEIAIKAAQTGHLVLSTLHTNSTCETLVRLQQMGVARWMLSSALTLVIAQRLVRKLCPHCRRQQGEPIHIPDNVWPSPLPHWQAPGCVHCYHGFYGRTALFEVLPITPVIRQLISANTDVESLETHARQAGMRTLFENGCLAVEQGLTTFEELIRVLGMPHGE.

222–229 (GPTGSGKT) is a binding site for ATP.

The protein belongs to the GSP E family.

The protein is Protein transport protein HofB homolog (hofB) of Escherichia coli (strain K12).